Here is a 444-residue protein sequence, read N- to C-terminus: Platelet-activating factor acetylhydrolase (444 aa).

A signal peptide spans 1–21; sequence MLPPKLHALFCLCSCLTLVHP. Asn-60 and Asn-200 each carry an N-linked (GlcNAc...) asparagine glycan. Catalysis depends on Ser-274, which acts as the Nucleophile. Catalysis depends on charge relay system residues Asp-297 and His-352. The N-linked (GlcNAc...) asparagine glycan is linked to Asn-424.

It belongs to the AB hydrolase superfamily. Lipase family. In terms of processing, N-glycosylated. As to expression, plasma.

The protein localises to the secreted. Its subcellular location is the extracellular space. The catalysed reaction is a 1-O-alkyl-2-acetyl-sn-glycero-3-phosphocholine + H2O = a 1-O-alkyl-sn-glycero-3-phosphocholine + acetate + H(+). It carries out the reaction 1-O-decyl-2-acetyl-sn-glycero-3-phosphocholine + H2O = 1-O-decyl-sn-glycero-3-phosphocholine + acetate + H(+). The enzyme catalyses 1-O-dodecyl-2-acetyl-sn-glycero-3-phosphocholine + H2O = 1-O-dodecyl-sn-glycero-3-phosphocholine + acetate + H(+). It catalyses the reaction 1-O-tetradecyl-2-acetyl-sn-glycero-3-phosphocholine + H2O = 1-O-tetradecyl-sn-glycero-3-phosphocholine + acetate + H(+). The catalysed reaction is 1-O-hexadecyl-2-acetyl-sn-glycero-3-phosphocholine + H2O = 1-O-hexadecyl-sn-glycero-3-phosphocholine + acetate + H(+). It carries out the reaction 1-O-octadecyl-2-acetyl-sn-glycero-3-phosphocholine + H2O = 1-O-octadecyl-sn-glycero-3-phosphocholine + acetate + H(+). The enzyme catalyses 1-hexadecanoyl-2-acetyl-sn-glycero-3-phosphocholine + H2O = 1-hexadecanoyl-sn-glycero-3-phosphocholine + acetate + H(+). It catalyses the reaction 1-hexadecanoyl-2-propionyl-sn-glycero-3-phosphocholine + H2O = propanoate + 1-hexadecanoyl-sn-glycero-3-phosphocholine + H(+). The catalysed reaction is 1-hexadecanoyl-2-butanoyl-sn-glycero-3-phosphocholine + H2O = butanoate + 1-hexadecanoyl-sn-glycero-3-phosphocholine + H(+). It carries out the reaction 1-hexadecanoyl-2-pentanoyl-sn-glycero-3-phosphocholine + H2O = pentanoate + 1-hexadecanoyl-sn-glycero-3-phosphocholine + H(+). The enzyme catalyses 1-hexadecanoyl-2-glutaroyl-sn-glycero-3-phosphocholine + H2O = glutarate + 1-hexadecanoyl-sn-glycero-3-phosphocholine + H(+). It catalyses the reaction 1-hexadecanoyl-2-(5-oxopentanoyl)-sn-glycero-3-phosphocholine + H2O = 5-oxopentanoate + 1-hexadecanoyl-sn-glycero-3-phosphocholine + H(+). The catalysed reaction is 1-hexadecanoyl-2-(9-oxononanoyl)-sn-glycero-3-phosphocholine + H2O = 9-oxononanoate + 1-hexadecanoyl-sn-glycero-3-phosphocholine + H(+). It carries out the reaction 1-hexadecanoyl-2-[9-hydroperoxy-(10E-octadecenoyl)]-sn-glycero-3-phosphocholine + H2O = 9-hydroperoxy-10E-octadecenoate + 1-hexadecanoyl-sn-glycero-3-phosphocholine + H(+). The enzyme catalyses 1-hexadecanoyl-2-(10-hydroperoxy-8E-octadecenoyl)-sn-glycero-3-phosphocholine + H2O = 10-hydroperoxy-(8E)-octadecenoate + 1-hexadecanoyl-sn-glycero-3-phosphocholine + H(+). Its function is as follows. Lipoprotein-associated calcium-independent phospholipase A2 involved in phospholipid catabolism during inflammatory and oxidative stress response. At the lipid-aqueous interface, hydrolyzes the ester bond of fatty acyl group attached at sn-2 position of phospholipids (phospholipase A2 activity). Specifically targets phospholipids with a short-chain fatty acyl group at sn-2 position. Can hydrolyze phospholipids with long fatty acyl chains, only if they carry oxidized functional groups. Hydrolyzes and inactivates platelet-activating factor (PAF, 1-O-alkyl-2-acetyl-sn-glycero-3-phosphocholine), a potent pro-inflammatory signaling lipid that acts through PTAFR on various innate immune cells. Hydrolyzes oxidatively truncated phospholipids carrying an aldehyde group at omega position, preventing their accumulation in low-density lipoprotein (LDL) particles and uncontrolled pro-inflammatory effects. As part of high-density lipoprotein (HDL) particles, can hydrolyze phospholipids having long-chain fatty acyl hydroperoxides at sn-2 position and protect against potential accumulation of these oxylipins in the vascular wall. Catalyzes the release from membrane phospholipids of F2-isoprostanes, lipid biomarkers of cellular oxidative damage. This is Platelet-activating factor acetylhydrolase (PLA2G7) from Canis lupus familiaris (Dog).